The primary structure comprises 498 residues: Acetyl-coenzyme A carboxylase carboxyl transferase subunit beta, chloroplastic (498 aa).

A disordered region spans residues 36 to 59 (SVNEDPIINDMDKDIPSGSDSDNS). One can recognise a CoA carboxyltransferase N-terminal domain in the interval 231–498 (LWVQCENCYG…FFPLNQNSIK (268 aa)). Zn(2+) contacts are provided by Cys235, Cys238, Cys254, and Cys257. The C4-type zinc finger occupies 235–257 (CENCYGLNYKRFLKSKMNICEHC).

Belongs to the AccD/PCCB family. In terms of assembly, acetyl-CoA carboxylase is a heterohexamer composed of biotin carboxyl carrier protein, biotin carboxylase and 2 subunits each of ACCase subunit alpha and ACCase plastid-coded subunit beta (accD). Requires Zn(2+) as cofactor.

It localises to the plastid. Its subcellular location is the chloroplast stroma. The enzyme catalyses N(6)-carboxybiotinyl-L-lysyl-[protein] + acetyl-CoA = N(6)-biotinyl-L-lysyl-[protein] + malonyl-CoA. The protein operates within lipid metabolism; malonyl-CoA biosynthesis; malonyl-CoA from acetyl-CoA: step 1/1. Component of the acetyl coenzyme A carboxylase (ACC) complex. Biotin carboxylase (BC) catalyzes the carboxylation of biotin on its carrier protein (BCCP) and then the CO(2) group is transferred by the transcarboxylase to acetyl-CoA to form malonyl-CoA. This Morus indica (Mulberry) protein is Acetyl-coenzyme A carboxylase carboxyl transferase subunit beta, chloroplastic.